A 128-amino-acid polypeptide reads, in one-letter code: Large ribosomal subunit protein bL12 (128 aa).

The protein belongs to the bacterial ribosomal protein bL12 family. In terms of assembly, homodimer. Part of the ribosomal stalk of the 50S ribosomal subunit. Forms a multimeric L10(L12)X complex, where L10 forms an elongated spine to which 2 to 4 L12 dimers bind in a sequential fashion. Binds GTP-bound translation factors.

Functionally, forms part of the ribosomal stalk which helps the ribosome interact with GTP-bound translation factors. Is thus essential for accurate translation. The chain is Large ribosomal subunit protein bL12 from Synechococcus sp. (strain CC9311).